A 729-amino-acid polypeptide reads, in one-letter code: Fatty acid oxidation complex subunit alpha (729 aa).

Residues 1 to 189 form an enoyl-CoA hydratase/isomerase region; that stretch reads MLYKGDTLYL…KIGLVDGVVK (189 aa). Asp296 is a binding site for substrate. Residues 311 to 729 are 3-hydroxyacyl-CoA dehydrogenase; that stretch reads ETPKQAAVLG…ARPVGSLKTA (419 aa). Residues Met324, Asp343, 400–402, Lys407, and Ser429 each bind NAD(+); that span reads VVE. The active-site For 3-hydroxyacyl-CoA dehydrogenase activity is His450. An NAD(+)-binding site is contributed by Asn453. 2 residues coordinate substrate: Asn500 and Tyr660. Residues 708-729 form a disordered region; it reads RHNEPYYPPVEPARPVGSLKTA.

The protein in the N-terminal section; belongs to the enoyl-CoA hydratase/isomerase family. In the C-terminal section; belongs to the 3-hydroxyacyl-CoA dehydrogenase family. Heterotetramer of two alpha chains (FadB) and two beta chains (FadA).

The catalysed reaction is a (3S)-3-hydroxyacyl-CoA + NAD(+) = a 3-oxoacyl-CoA + NADH + H(+). It carries out the reaction a (3S)-3-hydroxyacyl-CoA = a (2E)-enoyl-CoA + H2O. The enzyme catalyses a 4-saturated-(3S)-3-hydroxyacyl-CoA = a (3E)-enoyl-CoA + H2O. It catalyses the reaction (3S)-3-hydroxybutanoyl-CoA = (3R)-3-hydroxybutanoyl-CoA. The catalysed reaction is a (3Z)-enoyl-CoA = a 4-saturated (2E)-enoyl-CoA. It carries out the reaction a (3E)-enoyl-CoA = a 4-saturated (2E)-enoyl-CoA. It participates in lipid metabolism; fatty acid beta-oxidation. Its function is as follows. Involved in the aerobic and anaerobic degradation of long-chain fatty acids via beta-oxidation cycle. Catalyzes the formation of 3-oxoacyl-CoA from enoyl-CoA via L-3-hydroxyacyl-CoA. It can also use D-3-hydroxyacyl-CoA and cis-3-enoyl-CoA as substrate. This is Fatty acid oxidation complex subunit alpha from Salmonella schwarzengrund (strain CVM19633).